A 443-amino-acid chain; its full sequence is MVLITRYLPSVTDNNQPALEGQSKDQIVDTVITSTTVGIINQLTMLVAHSNSIFTALANDANLVTQRIEKLGSRIRPLIQSIPSIEDYHRNTSIDTMNSKPRAEFHADNSERNQHFTHASIPASINTVYEKCKPPPNLQLLDPYMDDGQKSLKLYTNPDFFMDEWVAEQQKLHEEARQRKRERREARLKKKGEKNEVEVKKVKSVTKVRYDPVTGEKITINIESPHTSSPQIQHQSNNTATPQHTTQHFGTNQYQAPPPPPLSQSSPSQQHSPINSYTPPPPPLNTSTPSPSSSFQGRPPSTGFNTPPPPMSNNNNMPPPPPMQQNGGAANNRLSVHNSAPIVAAPAPPPPPPPPSAPAPPPPPMAKAGGGASDIKPKASGARSDLLSSIMQGMALKPAEERKVAEAPKKEEALNVADILARRIAWAGDSDSSEDESDDSDWD.

Residues 1–96 form an interaction with brk1 and abiA region; that stretch reads MVLITRYLPS…DYHRNTSIDT (96 aa). The stretch at 166 to 201 forms a coiled coil; the sequence is VAEQQKLHEEARQRKRERREARLKKKGEKNEVEVKK. 2 disordered regions span residues 176–197 and 220–386; these read ARQR…KNEV and INIE…RSDL. Positions 178-192 are enriched in basic residues; it reads QRKRERREARLKKKG. A compositionally biased stretch (polar residues) spans 221–252; it reads NIESPHTSSPQIQHQSNNTATPQHTTQHFGTN. 2 stretches are compositionally biased toward low complexity: residues 263–277 and 285–305; these read SQSS…INSY and NTST…TGFN. Residues 306–323 are compositionally biased toward pro residues; the sequence is TPPPPMSNNNNMPPPPPM. The segment covering 324–338 has biased composition (polar residues); the sequence is QQNGGAANNRLSVHN. Residues 346-365 show a composition bias toward pro residues; sequence PAPPPPPPPPSAPAPPPPPM. The region spanning 382-399 is the WH2 domain; that stretch reads ARSDLLSSIMQGMALKPA.

It belongs to the SCAR/WAVE family. In terms of assembly, part of a Scar/WAVE complex containing brk1, scrA, abiA, pirA and napA. Interacts with brk1 and abiA.

The protein localises to the cytoplasm. It localises to the cytoskeleton. Its subcellular location is the cell projection. The protein resides in the pseudopodium tip. It is found in the filopodium tip. Functionally, involved in regulation of actin and microtubule organization. Regulates phagocytosis and macropinocytosis. In Dictyostelium discoideum (Social amoeba), this protein is Protein SCAR (scrA).